The following is a 389-amino-acid chain: MLSVRIPLAPITNPQQLQLSPLKGLSLVDKENTPPALSGARVLASKTARRIFQEPAEPKTKAAAPGVEDEPLLRENPRRFVIFPIEYHDIWQMYKKAEASFWTAEEVDLSKDIQHWESLKPEERYFISHVLAFFAASDGIVNENLVERFSQEVQITEARCFYGFQIAMENIHSEMYSLLIDTYIKDPKEREFLFNAIETMPCVEKKADWALRWIGDKEATYGERVVAFAAVEGIFFSGSFASIFWLKKRGLMPGLTFSNELISRDEGLHCDFACLMFKHLVHKPSEERVREIIINAVRVEQEFLTEALPVKLIGMNCTLMKQYIEFVADRLMLELGFSKVFRVENPFDFMENISLEGKTNFFEKRVGEYQRMGVMSSPTENSFTLDADF.

S20 bears the Phosphoserine mark. T33 bears the Phosphothreonine mark. Residues 49 to 51 carry the Cy motif; that stretch reads RRI. Residues D138, E169, and H172 each contribute to the Fe cation site. Y176 is a catalytic residue. The Fe cation site is built by E232, E266, and H269.

The protein belongs to the ribonucleoside diphosphate reductase small chain family. Heterodimer of a large and a small subunit. Interacts (via Cy motif and when phosphorylated at Thr-33) with CCNF; the interaction occurs exclusively in G2 and early M. Requires Fe cation as cofactor. In terms of processing, phosphorylation on Ser-20 relieves the inhibitory effect on Wnt signaling. Phosphorylated on Thr-33 by CDK1 and CDK2; predominantly in G2 and M phase. Post-translationally, ubiquitinated by the SCF(CCNF) E3 ubiquitin-protein ligase complex; leading to its degradation by the proteasome.

It localises to the cytoplasm. It is found in the nucleus. The enzyme catalyses a 2'-deoxyribonucleoside 5'-diphosphate + [thioredoxin]-disulfide + H2O = a ribonucleoside 5'-diphosphate + [thioredoxin]-dithiol. Its function is as follows. Provides the precursors necessary for DNA synthesis. Catalyzes the biosynthesis of deoxyribonucleotides from the corresponding ribonucleotides. Inhibits Wnt signaling. This Macaca fascicularis (Crab-eating macaque) protein is Ribonucleoside-diphosphate reductase subunit M2 (RRM2).